The sequence spans 119 residues: Beta-2-microglobulin (119 aa).

The first 20 residues, 1–20 (MARSVVAALLVLLSLSGLEA), serve as a signal peptide directing secretion. The Ig-like C1-type domain maps to 25–114 (PKIQVYSRHP…VTFPTPKTVK (90 aa)). Cys-45 and Cys-100 are disulfide-bonded.

The protein belongs to the beta-2-microglobulin family. As to quaternary structure, heterodimer of an alpha chain and a beta chain. Beta-2-microglobulin is the beta-chain of major histocompatibility complex class I molecules.

Its subcellular location is the secreted. Component of the class I major histocompatibility complex (MHC). Involved in the presentation of peptide antigens to the immune system. In Saimiri boliviensis boliviensis (Bolivian squirrel monkey), this protein is Beta-2-microglobulin (B2M).